Reading from the N-terminus, the 590-residue chain is Pescadillo homolog (590 aa).

One can recognise a BRCT domain in the interval 332–422; it reads VCKSLFKDLK…IILPTEKYLV (91 aa). Residues 561-590 form a disordered region; it reads AMKISQSRKRSGVEIIEQRKKRLNDTQPSS.

This sequence belongs to the pescadillo family. In terms of assembly, interacts with BOP1 and WDR12. Interacts with NSN1. As to expression, expressed in shoot and root apical meristems, epidermal cells and vasculature of developing leaves, trichome progenitor cells, young flowers, developing pollen grains and ovules, and mature pollen grains.

It is found in the nucleus. The protein localises to the nucleolus. It localises to the nucleoplasm. Required for maturation of ribosomal RNAs and formation of the large ribosomal subunit. Plays an essential role in cell growth and survival through its regulation of ribosome biogenesis and mitotic progression. Required for normal root cell growth and differentiation. This is Pescadillo homolog from Arabidopsis thaliana (Mouse-ear cress).